A 172-amino-acid polypeptide reads, in one-letter code: Small ribosomal subunit protein uS5 (172 aa).

In terms of domain architecture, S5 DRBM spans leucine 16–valine 79.

Belongs to the universal ribosomal protein uS5 family. Part of the 30S ribosomal subunit. Contacts proteins S4 and S8.

Functionally, with S4 and S12 plays an important role in translational accuracy. Its function is as follows. Located at the back of the 30S subunit body where it stabilizes the conformation of the head with respect to the body. The polypeptide is Small ribosomal subunit protein uS5 (Chlorobium phaeobacteroides (strain DSM 266 / SMG 266 / 2430)).